A 568-amino-acid chain; its full sequence is Methionine--tRNA ligase (568 aa).

The 'HIGH' region signature appears at 10 to 20 (PYVQSVPHLGN). Residues C143, C146, C156, and C159 each coordinate Zn(2+). The 'KMSKS' region signature appears at 333–337 (KFSKS). K336 provides a ligand contact to ATP.

The protein belongs to the class-I aminoacyl-tRNA synthetase family. MetG type 1 subfamily. It depends on Zn(2+) as a cofactor.

It is found in the cytoplasm. The enzyme catalyses tRNA(Met) + L-methionine + ATP = L-methionyl-tRNA(Met) + AMP + diphosphate. Is required not only for elongation of protein synthesis but also for the initiation of all mRNA translation through initiator tRNA(fMet) aminoacylation. The chain is Methionine--tRNA ligase from Metallosphaera sedula (strain ATCC 51363 / DSM 5348 / JCM 9185 / NBRC 15509 / TH2).